The following is a 1241-amino-acid chain: ATP-dependent helicase/nuclease subunit A (1241 aa).

The UvrD-like helicase ATP-binding domain occupies 12-485 (SQWTDDQWKA…IDLAKNFRSR (474 aa)). Position 33–40 (33–40 (AAAGSGKT)) interacts with ATP. The UvrD-like helicase C-terminal domain maps to 505–805 (GEIDYDADAE…RIMTIHKSKG (301 aa)).

Belongs to the helicase family. AddA subfamily. Heterodimer of AddA and AddB/RexB. Mg(2+) serves as cofactor.

The catalysed reaction is Couples ATP hydrolysis with the unwinding of duplex DNA by translocating in the 3'-5' direction.. It catalyses the reaction ATP + H2O = ADP + phosphate + H(+). Its function is as follows. The heterodimer acts as both an ATP-dependent DNA helicase and an ATP-dependent, dual-direction single-stranded exonuclease. Recognizes the chi site generating a DNA molecule suitable for the initiation of homologous recombination. The AddA nuclease domain is required for chi fragment generation; this subunit has the helicase and 3' -&gt; 5' nuclease activities. This chain is ATP-dependent helicase/nuclease subunit A, found in Bacillus cereus (strain G9842).